The following is a 207-amino-acid chain: 3-isopropylmalate dehydratase small subunit (207 aa).

This sequence belongs to the LeuD family. LeuD type 1 subfamily. Heterodimer of LeuC and LeuD.

The enzyme catalyses (2R,3S)-3-isopropylmalate = (2S)-2-isopropylmalate. It participates in amino-acid biosynthesis; L-leucine biosynthesis; L-leucine from 3-methyl-2-oxobutanoate: step 2/4. Catalyzes the isomerization between 2-isopropylmalate and 3-isopropylmalate, via the formation of 2-isopropylmaleate. The protein is 3-isopropylmalate dehydratase small subunit of Gluconacetobacter diazotrophicus (strain ATCC 49037 / DSM 5601 / CCUG 37298 / CIP 103539 / LMG 7603 / PAl5).